The sequence spans 493 residues: MEKYENLGLVGEGSYGMVMKCRNKDTGRIVAIKKFLESDDDKMVKKIAMREIKLLKQLRHENLVNLLEVCKKKKRWYLVFEFVDHTILDDLELFPNGLDYQVVQKYLFQIINGIGFCHSHNIIHRDIKPENILVSQSGVVKLCDFGFARTLAAPGEVYTDYVATRWYRAPELLVGDVKYGKAVDVWAIGCLVTEMFMGEPLFPGDSDIDQLYHIMMCLGNLIPRHQELFNKNPVFAGVRLPEIKEREPLERRYPKLSEVVIDLAKKCLHIDPDKRPFCAELLHHDFFQMDGFAERFSQELQLKVQKDARNVSLSKKSQNRKKEKEKDDSLVEERKTLVVQDTNADPKIKDYKLFKIKGSKIDGEKAEKGNRASNASCLHDSRTSHNKIVPSTSLKDCSNVSVDHTRNPSVAIPPLTHNLSAVAPSINSGMGTETIPIQGYRVDEKTKKCSIPFVKPNRHSPSGIYNINVTTLVSGPPLSDDSGADLPQMEHQH.

Residues 4 to 287 (YENLGLVGEG…CAELLHHDFF (284 aa)) form the Protein kinase domain. Residues 10-18 (VGEGSYGMV) and K33 contribute to the ATP site. A [NKR]KIAxRE motif is present at residues 45 to 51 (KKIAMRE). D126 acts as the Proton acceptor in catalysis. The disordered stretch occupies residues 363-384 (GEKAEKGNRASNASCLHDSRTS).

The protein belongs to the protein kinase superfamily. CMGC Ser/Thr protein kinase family. CDC2/CDKX subfamily. Expressed in testis and kidney, and at lower level in brain and lung.

Its subcellular location is the cytoplasm. It localises to the nucleus. It carries out the reaction L-seryl-[protein] + ATP = O-phospho-L-seryl-[protein] + ADP + H(+). It catalyses the reaction L-threonyl-[protein] + ATP = O-phospho-L-threonyl-[protein] + ADP + H(+). This chain is Cyclin-dependent kinase-like 2, found in Homo sapiens (Human).